We begin with the raw amino-acid sequence, 263 residues long: Urease accessory protein UreH (263 aa).

This sequence belongs to the UreD family. UreH, UreF and UreG form a complex that acts as a GTP-hydrolysis-dependent molecular chaperone, activating the urease apoprotein by helping to assemble the nickel containing metallocenter of UreC. The UreE protein probably delivers the nickel.

It localises to the cytoplasm. In terms of biological role, required for maturation of urease via the functional incorporation of the urease nickel metallocenter. The polypeptide is Urease accessory protein UreH (Helicobacter acinonychis (strain Sheeba)).